The chain runs to 120 residues: Large ribosomal subunit protein uL18 (120 aa).

Positions 1 to 10 (MKLTRRESKE) are enriched in basic and acidic residues. The tract at residues 1 to 26 (MKLTRRESKERRHRRVRGKVQGSPER) is disordered.

It belongs to the universal ribosomal protein uL18 family. In terms of assembly, part of the 50S ribosomal subunit; part of the 5S rRNA/L5/L18/L25 subcomplex. Contacts the 5S and 23S rRNAs.

This is one of the proteins that bind and probably mediate the attachment of the 5S RNA into the large ribosomal subunit, where it forms part of the central protuberance. The chain is Large ribosomal subunit protein uL18 from Nostoc sp. (strain PCC 7120 / SAG 25.82 / UTEX 2576).